The sequence spans 311 residues: Cytochrome c biogenesis protein CcsA (311 aa).

8 helical membrane-spanning segments follow: residues 11 to 31, 44 to 64, 68 to 88, 101 to 121, 146 to 166, 217 to 237, 251 to 268, and 280 to 300; these read VLLL…LAFW, VVQL…LWRW, GHFP…GCTF, LVPA…SFAL, VIMM…AVLF, TITV…VWAN, TWAL…HTRL, and VAVS…LLGI.

This sequence belongs to the CcmF/CycK/Ccl1/NrfE/CcsA family. May interact with ccs1.

It localises to the cellular thylakoid membrane. Required during biogenesis of c-type cytochromes (cytochrome c6 and cytochrome f) at the step of heme attachment. The polypeptide is Cytochrome c biogenesis protein CcsA (Synechococcus sp. (strain RCC307)).